The sequence spans 104 residues: L-rhamnose mutarotase (104 aa).

Tyrosine 18 contacts substrate. Residue histidine 22 is the Proton donor of the active site. Substrate-binding positions include tyrosine 41 and 76 to 77 (WW).

The protein belongs to the rhamnose mutarotase family. In terms of assembly, homodimer.

Its subcellular location is the cytoplasm. The catalysed reaction is alpha-L-rhamnose = beta-L-rhamnose. The protein operates within carbohydrate metabolism; L-rhamnose metabolism. Its function is as follows. Involved in the anomeric conversion of L-rhamnose. This Cronobacter sakazakii (strain ATCC BAA-894) (Enterobacter sakazakii) protein is L-rhamnose mutarotase.